The chain runs to 266 residues: Tryptophan synthase alpha chain (266 aa).

Active-site proton acceptor residues include Glu-51 and Asp-62.

The protein belongs to the TrpA family. In terms of assembly, tetramer of two alpha and two beta chains.

It catalyses the reaction (1S,2R)-1-C-(indol-3-yl)glycerol 3-phosphate + L-serine = D-glyceraldehyde 3-phosphate + L-tryptophan + H2O. The protein operates within amino-acid biosynthesis; L-tryptophan biosynthesis; L-tryptophan from chorismate: step 5/5. Its function is as follows. The alpha subunit is responsible for the aldol cleavage of indoleglycerol phosphate to indole and glyceraldehyde 3-phosphate. The polypeptide is Tryptophan synthase alpha chain (Thermosynechococcus vestitus (strain NIES-2133 / IAM M-273 / BP-1)).